We begin with the raw amino-acid sequence, 1877 residues long: Protein TIC 214 (1877 aa).

Helical transmembrane passes span 18–38 (IINS…FSIG), 67–87 (FIAG…HLAL), 90–110 (PHTI…WNNH), 127–147 (LSIQ…HFIL), 175–195 (VGWL…LVWI), and 224–244 (IFSI…PSPI). A compositionally biased stretch (basic and acidic residues) spans 249–258 (FKETSETEER). The tract at residues 249–308 (FKETSETEERGEGEEETDVEIETTFETKGTRQEQEGSTEEDPSLFSEEKEDPDKIDEREE) is disordered. 2 stretches are compositionally biased toward acidic residues: residues 259 to 271 (GEGE…EIET) and 284 to 298 (GSTE…EEKE). The span at 299-308 (DPDKIDEREE) shows a compositional bias: basic and acidic residues.

Belongs to the TIC214 family. Part of the Tic complex.

The protein resides in the plastid. It localises to the chloroplast inner membrane. Functionally, involved in protein precursor import into chloroplasts. May be part of an intermediate translocation complex acting as a protein-conducting channel at the inner envelope. In Eucalyptus globulus subsp. globulus (Tasmanian blue gum), this protein is Protein TIC 214.